Reading from the N-terminus, the 140-residue chain is Putative membrane protein ORF7 (140 aa).

Residues 44–60 (TCAVSFFALFMLIIWVL) form a helical membrane-spanning segment. Residues 66–118 (PEGSTTRGTDAHTQTEGSTTRGTDAHTQTEGSRDQGSMTPEADDLTRPPLGHG) form a disordered region. A compositionally biased stretch (polar residues) spans 68–103 (GSTTRGTDAHTQTEGSTTRGTDAHTQTEGSRDQGSM).

It is found in the membrane. This chain is Putative membrane protein ORF7 (ORF7), found in Ictalurid herpesvirus 1 (strain Auburn) (IcHV-1).